Reading from the N-terminus, the 52-residue chain is Insulin (52 aa).

Intrachain disulfides connect Cys-7–Cys-38, Cys-19–Cys-51, and Cys-37–Cys-42.

The protein belongs to the insulin family. Heterodimer of a B chain and an A chain linked by two disulfide bonds.

The protein localises to the secreted. Its function is as follows. Insulin decreases blood glucose concentration. It increases cell permeability to monosaccharides, amino acids and fatty acids. It accelerates glycolysis, the pentose phosphate cycle, and glycogen synthesis in liver. The sequence is that of Insulin (ins) from Atractosteus spatula (Alligator gar).